We begin with the raw amino-acid sequence, 446 residues long: tRNA modification GTPase MnmE (446 aa).

R24, E81, and K120 together coordinate (6S)-5-formyl-5,6,7,8-tetrahydrofolate. A TrmE-type G domain is found at 216–368 (GLHAVLIGPP…LHTRLRELAL (153 aa)). N226 serves as a coordination point for K(+). GTP-binding positions include 226–231 (NAGKSS), 245–251 (TDVAGTT), and 270–273 (DTAG). S230 lines the Mg(2+) pocket. The K(+) site is built by T245, V247, and T250. T251 contributes to the Mg(2+) binding site. Position 446 (K446) interacts with (6S)-5-formyl-5,6,7,8-tetrahydrofolate.

The protein belongs to the TRAFAC class TrmE-Era-EngA-EngB-Septin-like GTPase superfamily. TrmE GTPase family. As to quaternary structure, homodimer. Heterotetramer of two MnmE and two MnmG subunits. Requires K(+) as cofactor.

It localises to the cytoplasm. Its function is as follows. Exhibits a very high intrinsic GTPase hydrolysis rate. Involved in the addition of a carboxymethylaminomethyl (cmnm) group at the wobble position (U34) of certain tRNAs, forming tRNA-cmnm(5)s(2)U34. The protein is tRNA modification GTPase MnmE of Xanthomonas campestris pv. campestris (strain 8004).